Reading from the N-terminus, the 639-residue chain is MSHQETHGFQTEVKQLLNLMIHSLYSNKEIFLRELVSNAADAADKLRYEALTKDELYEGDGELRVRVSADSEKGTVTIEDNGIGMTRDGVIEHLGTIAKSGTAEFFKNLSGDESKDSQLIGQFGVGFYSAFIVADKVTVRTRAAGHAADEAVQWESAGEGEFTVENIVKESRGTEIILHLREEEKEFASDYRLRSIITKYSDHISVPVEMWQEGTPAQEATEEGGEAIPATEGHWKAMNKATALWTRNKSDVTDEEYQEFYKHISHDFADPLLWSHNRVEGKQEYTSLLYIPSKAPWDLWNRDRKHGLKLFVQRVFVMDDAEQFMPSYLRFVQGLIDSNDLPLNVSREILQDNKITTALRTAVTKRVLGMLEKLAKNDPEKYQTFWAEFGQVLKEGPAEDFANKEKIAGLLRFASTHTNEAAHTVSLSDYVERMKEGQSKIYYIVADSHEAAANSPHLELLRKKGIEVLLMSERIDEWLINHLSEFDGKQLHSVTRGDLELGELEDAAEKEAQEKLETESEGLVKRVKEVLGDKVAEVKVTSRLTDTPACVVAGAGEMSSQMIKLMQAAGQAVTESKPVFELNPEHPLVKRLDTEQDEEVFGQWAELLLQQAQLSEKGSLADPSAFIKLMNKMLLASVK.

The interval 1–347 is a; substrate-binding; sequence MSHQETHGFQ…SNDLPLNVSR (347 aa). The b stretch occupies residues 348 to 564; that stretch reads EILQDNKITT…AGEMSSQMIK (217 aa). Positions 565–639 are c; sequence LMQAAGQAVT…MNKMLLASVK (75 aa).

The protein belongs to the heat shock protein 90 family. As to quaternary structure, homodimer.

Its subcellular location is the cytoplasm. Molecular chaperone. Has ATPase activity. The chain is Chaperone protein HtpG from Shewanella loihica (strain ATCC BAA-1088 / PV-4).